A 1474-amino-acid chain; its full sequence is Alpha-2-macroglobulin-P (1474 aa).

The first 32 residues, 1–32, serve as a signal peptide directing secretion; the sequence is MGKRWLPSLALLPLPPPLLLLLLLLLPTNASA. Cys-55 and Cys-93 form a disulfide bridge. Asn-62, Asn-77, and Asn-253 each carry an N-linked (GlcNAc...) asparagine glycan. Intrachain disulfides connect Cys-257-Cys-305 and Cys-275-Cys-293. An N-linked (GlcNAc...) asparagine glycan is attached at Asn-402. Intrachain disulfides connect Cys-476-Cys-569, Cys-601-Cys-771, and Cys-650-Cys-697. The bait region stretch occupies residues 623–752; it reads LVYDLLPVKD…LVIVDSTGVA (130 aa). Asn-654 and Asn-774 each carry an N-linked (GlcNAc...) asparagine glycan. Intrachain disulfides connect Cys-821–Cys-849, Cys-847–Cys-883, Cys-921–Cys-1321, Cys-1079–Cys-1127, and Cys-1352–Cys-1467. The N-linked (GlcNAc...) asparagine glycan is linked to Asn-869. The segment at residues 972-975 is a cross-link (isoglutamyl cysteine thioester (Cys-Gln)); that stretch reads CGEQ. The N-linked (GlcNAc...) asparagine glycan is linked to Asn-991. An N-linked (GlcNAc...) asparagine glycan is attached at Asn-1366.

The protein belongs to the protease inhibitor I39 (alpha-2-macroglobulin) family. Homotetramer; disulfide-linked. In terms of tissue distribution, expressed in uterus, mesometrial lymphoid aggregate and mammary tissue during pregnancy. Expressed in ovary, testis and kidney. Low level expression in heart. Not expressed in liver.

It localises to the secreted. Functionally, is able to inhibit all four classes of proteinases by a unique 'trapping' mechanism. This protein has a peptide stretch, called the 'bait region' which contains specific cleavage sites for different proteinases. When a proteinase cleaves the bait region, a conformational change is induced in the protein which traps the proteinase. The entrapped enzyme remains active against low molecular weight substrates (activity against high molecular weight substrates is greatly reduced). Following cleavage in the bait region a thioester bond is hydrolyzed and mediates the covalent binding of the protein to the proteinase. The polypeptide is Alpha-2-macroglobulin-P (Mus musculus (Mouse)).